Consider the following 482-residue polypeptide: MDGAVMEGPLFLQSQRFGTKRWRKTWAVLYPASPHGVARLEFFDHKGSSSRGGRGGSRRLDCKMIRLAECVSVVPVTVESPPEPGAVAFRLDTAQRSHLLAADAVSSTAWVQTLCRTAFPKGGWALAQTENQPKFSALEMLENSLYSPTWEGSQFWVTSQKTEASERCGLQGSYILRVEAEKLTLLTLGAQSQILEPLLFWPYTLLRRYGRDKVMFSFEAGRRCPSGPGTFTFQTSQGNDIFQAVEAAIQQQKAQGKVGQAQDILRTDSHDGETEGKTVPPPVPQDPLGSPPALYAEPLDSLRIPPGPSQDSVYSDPLGSTPAGAGEGVHSKKPLYWDLYGHVQQQLLKTKLTDSKEDPIYDEPEGLAPAPPRGLYDLPQEPRDAWWCQARLKEEGYELPYNPATDDYAVPPPRSPKPAPAPKPQGLILPESGTTRGSGSKGFSSDTALYSQVQKSGTSGAWDCGLSKVGNDRAGVKSEGST.

N-acetylmethionine is present on methionine 1. The region spanning 4-119 (AVMEGPLFLQ…WVQTLCRTAF (116 aa)) is the PH domain. Residue serine 48 is modified to Phosphoserine. An IRS-type PTB domain is found at 151–259 (EGSQFWVTSQ…QQQKAQGKVG (109 aa)). Residues serine 269 and serine 290 each carry the phosphoserine modification. Residues 269–328 (SHDGETEGKTVPPPVPQDPLGSPPALYAEPLDSLRIPPGPSQDSVYSDPLGSTPAGAGEG) form a disordered region. Tyrosine 295, tyrosine 336, tyrosine 340, tyrosine 361, and tyrosine 376 each carry phosphotyrosine. A disordered region spans residues 353 to 373 (TDSKEDPIYDEPEGLAPAPPR). Tyrosine 397 is subject to Phosphotyrosine; by INSR. Residues 398 to 482 (ELPYNPATDD…RAGVKSEGST (85 aa)) are disordered. Tyrosine 408 carries the phosphotyrosine modification. The segment covering 410–423 (VPPPRSPKPAPAPK) has biased composition (pro residues). A Phosphoserine modification is found at serine 415. Over residues 432-459 (SGTTRGSGSKGFSSDTALYSQVQKSGTS) the composition is skewed to polar residues. Residue tyrosine 450 is modified to Phosphotyrosine.

It belongs to the DOK family. Type A subfamily. As to quaternary structure, interacts with RasGAP, INPP5D/SHIP1 and ABL1. Interacts directly with phosphorylated ITGB3. Interacts with SRMS (via the SH2 and SH3 domains). In terms of processing, constitutively tyrosine-phosphorylated. Phosphorylated by TEC. Phosphorylated on tyrosine residues by the insulin receptor kinase. Results in the negative regulation of the insulin signaling pathway. Phosphorylated by LYN. Phosphorylated on tyrosine residues by SRMS. As to expression, expressed in lung, spleen, skeletal muscle and kidney.

It is found in the cytoplasm. It localises to the nucleus. Functionally, DOK proteins are enzymatically inert adaptor or scaffolding proteins. They provide a docking platform for the assembly of multimolecular signaling complexes. DOK1 appears to be a negative regulator of the insulin signaling pathway. Modulates integrin activation by competing with talin for the same binding site on ITGB3. This chain is Docking protein 1 (Dok1), found in Mus musculus (Mouse).